We begin with the raw amino-acid sequence, 213 residues long: Thymidine kinase (213 aa).

Residues 22–29 (GSMFSGKT) and 94–97 (DEAQ) contribute to the ATP site. Residue Glu-95 is the Proton acceptor of the active site. Cys-151, Cys-154, Cys-183, and Cys-186 together coordinate Zn(2+). Residues 185–213 (RCFQPPRPTSTSSLKAPAPAATAPRPELP) are disordered. Positions 193–213 (TSTSSLKAPAPAATAPRPELP) are enriched in low complexity.

This sequence belongs to the thymidine kinase family. As to quaternary structure, homotetramer.

The protein resides in the cytoplasm. The catalysed reaction is thymidine + ATP = dTMP + ADP + H(+). The protein is Thymidine kinase of Rhodothermus sp. (strain ITI 518).